The chain runs to 281 residues: Bifunctional protein FolD (281 aa).

NADP(+) contacts are provided by residues 165-167 and serine 190; that span reads GRS.

Belongs to the tetrahydrofolate dehydrogenase/cyclohydrolase family. As to quaternary structure, homodimer.

It carries out the reaction (6R)-5,10-methylene-5,6,7,8-tetrahydrofolate + NADP(+) = (6R)-5,10-methenyltetrahydrofolate + NADPH. It catalyses the reaction (6R)-5,10-methenyltetrahydrofolate + H2O = (6R)-10-formyltetrahydrofolate + H(+). The protein operates within one-carbon metabolism; tetrahydrofolate interconversion. In terms of biological role, catalyzes the oxidation of 5,10-methylenetetrahydrofolate to 5,10-methenyltetrahydrofolate and then the hydrolysis of 5,10-methenyltetrahydrofolate to 10-formyltetrahydrofolate. In Polaromonas naphthalenivorans (strain CJ2), this protein is Bifunctional protein FolD.